The chain runs to 449 residues: Probable magnetosome protein Mms48 (449 aa).

The N-terminal stretch at 1–18 (MLLRLIVLLIFMSPVVFA) is a signal peptide. Residues 40–60 (SNMPVLLAVILVVFLIFSALS) form a helical membrane-spanning segment. The TPR repeat unit spans residues 323 to 356 (PDGHLAAGEAAFAVQKWGVARRHIMAALKIAPDA).

Its subcellular location is the magnetosome membrane. Its function is as follows. Overexpression in wild-type cells increases the number of cells with double magnetosome chains significantly. The 4 genes of this operon collectively influence magnetosome size and number. The chain is Probable magnetosome protein Mms48 from Magnetospirillum gryphiswaldense (strain DSM 6361 / JCM 21280 / NBRC 15271 / MSR-1).